Reading from the N-terminus, the 5005-residue chain is Bridge-like lipid transfer protein family member 1 (5005 aa).

The chain crosses the membrane as a helical span at residues 26-46 (NVVWLLVATILSCGWIIYLTY). 3 disordered regions span residues 691-721 (LRPS…LPPD), 1218-1257 (LSLQ…SSVA), and 1269-1310 (GTKR…LKRQ). Composition is skewed to low complexity over residues 700–711 (RVVSSPSTSSRP) and 1226–1240 (SHSS…SSSS). Over residues 1248 to 1257 (GEKESPSSVA) the composition is skewed to basic and acidic residues. Residues 1278-1303 (SIPTEISGNSPVSPNTQDKSVGQSPL) show a composition bias toward polar residues. Serine 1301, serine 1305, and serine 1323 each carry phosphoserine. Residue threonine 1325 is modified to Phosphothreonine. Disordered regions lie at residues 1343–1376 (SDVS…SNSF), 1400–1427 (EFEP…QQID), 1521–1548 (TNKR…SSSF), and 1676–1704 (FSEN…QGQA). 2 positions are modified to phosphoserine: serine 1355 and serine 1406. Residues 1521–1530 (TNKRTSKSSL) are compositionally biased toward basic residues. The segment covering 1691-1704 (TEQSTIGTTNQGQA) has biased composition (polar residues). 2 positions are modified to phosphoserine: serine 1805 and serine 1808. Disordered regions lie at residues 1924–1991 (DTER…PLMP), 2401–2420 (SDQN…QDDV), and 2598–2677 (TAGS…KDVV). Polar residues-rich tracts occupy residues 1931–1948 (LTSN…YNTD), 1959–1971 (TSPS…NSVS), 2401–2418 (SDQN…TSQD), and 2598–2608 (TAGSASPTPTF). Serine 2601 and serine 2603 each carry phosphoserine. Residues 2619 to 2638 (SDFSRSSRGSLNGGNRVNNA) are compositionally biased toward low complexity. Residues 2643–2665 (TNNENNKKESRNKNSLGRSERRT) are compositionally biased toward basic and acidic residues. The residue at position 2755 (serine 2755) is a Phosphoserine. The tract at residues 2928–2967 (RQPSTAPQPVKEDIATPLPSEKTPTSVNQTPVETNEFPQL) is disordered. Residues 2949 to 2964 (KTPTSVNQTPVETNEF) are compositionally biased toward polar residues. At serine 3562 the chain carries Phosphoserine. A compositionally biased stretch (polar residues) spans 3612-3622 (PSYSRSKSISA). 6 disordered regions span residues 3612 to 3661 (PSYS…VTFN), 3686 to 3744 (SSNS…ERFY), 3821 to 3843 (RRSY…KKFQ), 3914 to 3954 (YGMK…KGKG), 4088 to 4146 (GTTY…SSSS), and 4325 to 4394 (QSAS…KAAS). Serine 3653 carries the post-translational modification Phosphoserine. The span at 3686–3700 (SSNSEGSCSVFSSPK) shows a compositional bias: polar residues. The span at 3727–3736 (EDSEKDEKDE) shows a compositional bias: acidic residues. Positions 3821–3837 (RRSYDRSSRSLDQDSPS) are enriched in basic and acidic residues. Polar residues-rich tracts occupy residues 3931–3940 (TVQSKTNTLL) and 4098–4113 (PGGN…SASK). A compositionally biased stretch (low complexity) spans 4122 to 4146 (LGSPLGRSRHSSSQSDLTSSSSSSS). Position 4124 is a phosphoserine (serine 4124). Polar residues predominate over residues 4325-4358 (QSASFTHMPQSPNVFNEHMTNSTMSPGTVGQSLK). The segment covering 4359–4372 (SPASIRSRSVSDSS) has biased composition (low complexity). Residues 4381–4394 (KTSTPFNKSNKAAS) are compositionally biased toward polar residues.

In terms of tissue distribution, highly expressed in testis and ovary. Weakly or not expressed in other tissues.

It is found in the cell membrane. It localises to the endoplasmic reticulum membrane. Its subcellular location is the mitochondrion membrane. Tube-forming lipid transport protein which provides phosphatidylethanolamine for glycosylphosphatidylinositol (GPI) anchor synthesis in the endoplasmic reticulum. Plays a role in endosomal trafficking and endosome recycling. Also involved in the actin cytoskeleton and cilia structural dynamics. Acts as a regulator of phagocytosis. The chain is Bridge-like lipid transfer protein family member 1 from Homo sapiens (Human).